The sequence spans 140 residues: MMRISMSLPKKLLNEFDEVLRDRGYQSRSKGIRDALKDYIVRYQWMNEMEGERIGIIAVIYDHHYTGVMEDLADIQHDYREYINAVMHVHMTERHCLEVIVVKGDVAKIRELTEKMMRLKGVEHVRLTSTSTEQKIEHEH.

Ni(2+)-binding residues include H77, H88, H90, and C96.

Belongs to the transcriptional regulatory CopG/NikR family. Ni(2+) is required as a cofactor.

Transcriptional regulator. The polypeptide is Putative nickel-responsive regulator 2 (Methanothermobacter thermautotrophicus (strain ATCC 29096 / DSM 1053 / JCM 10044 / NBRC 100330 / Delta H) (Methanobacterium thermoautotrophicum)).